The chain runs to 224 residues: UPF0111 protein CT_691 (224 aa).

The protein belongs to the UPF0111 family.

This chain is UPF0111 protein CT_691, found in Chlamydia trachomatis serovar D (strain ATCC VR-885 / DSM 19411 / UW-3/Cx).